The sequence spans 227 residues: Lysosomal-associated transmembrane protein 4B (227 aa).

The next 4 membrane-spanning stretches (helical) occupy residues 26–46 (ILLGIWYLIINAVVLLILLSA), 72–92 (MCIAIAISLLMILICAMATYG), 100–120 (WIIPFFCYQIFDFALNTLVAI), and 153–173 (CLVLVILLFIGIILTFKGYLI). Residues 205 to 222 (PPYDDATAVTGTAKEPPP) are required for NEDD4 interaction.

Belongs to the LAPTM4/LAPTM5 transporter family. As to quaternary structure, homooligomer; upon reaching the lysosomes. Interacts with MCOLN1. Interacts with NEDD4; may play a role in the lysosomal sorting of LAPTM4B; enhances HGS association with NEDD4; mediates inhibition of EGFR degradation. Interacts with PIP5K1C; promotes SNX5 association with LAPTM4B; kinase activity of PIP5K1C is required; interaction is regulated by phosphatidylinositol 4,5-bisphosphate generated by PIP5K1C. Interacts with HGS; promotes HGS ubiquitination. Interacts with SNX5. Interacts with SLC3A2 and SLC7A5; recruits SLC3A2 and SLC7A5 to lysosomes to promote leucine uptake into these organelles and is required for mTORC1 activation. Interacts with LRRC32; decreases TGFB1 production in regulatory T cells. Interacts with BECN1; competes with EGFR for LAPTM4B binding; regulates EGFR activity. Interacts with EGFR; positively correlates with EGFR activation. In terms of processing, undergoes proteolytic cleavage following delivery to the lysosomes. Post-translationally, ubiquitinated by NEDD4.

The protein resides in the endomembrane system. The protein localises to the late endosome membrane. It localises to the cell membrane. It is found in the cell projection. Its subcellular location is the lysosome membrane. The protein resides in the endosome membrane. The protein localises to the endosome. It localises to the multivesicular body membrane. It is found in the multivesicular body lumen. In terms of biological role, required for optimal lysosomal function. Blocks EGF-stimulated EGFR intraluminal sorting and degradation. Conversely by binding with the phosphatidylinositol 4,5-bisphosphate, regulates its PIP5K1C interaction, inhibits HGS ubiquitination and relieves LAPTM4B inhibition of EGFR degradation. Recruits SLC3A2 and SLC7A5 (the Leu transporter) to the lysosome, promoting entry of leucine and other essential amino acid (EAA) into the lysosome, stimulating activation of proton-transporting vacuolar (V)-ATPase protein pump (V-ATPase) and hence mTORC1 activation. Plays a role as negative regulator of TGFB1 production in regulatory T cells. Binds ceramide and facilitates its exit from late endosome in order to control cell death pathways. This is Lysosomal-associated transmembrane protein 4B from Rattus norvegicus (Rat).